Consider the following 94-residue polypeptide: Small ribosomal subunit protein bS18 (94 aa).

The protein belongs to the bacterial ribosomal protein bS18 family. As to quaternary structure, part of the 30S ribosomal subunit. Forms a tight heterodimer with protein bS6.

Functionally, binds as a heterodimer with protein bS6 to the central domain of the 16S rRNA, where it helps stabilize the platform of the 30S subunit. The sequence is that of Small ribosomal subunit protein bS18 from Albidiferax ferrireducens (strain ATCC BAA-621 / DSM 15236 / T118) (Rhodoferax ferrireducens).